The sequence spans 179 residues: uncharacterized protein (179 aa).

Positions 27-54 are disordered; that stretch reads TAKKSRVQAREARAAVEENKKAQLERDK.

This is an uncharacterized protein from Escherichia coli (strain K12).